Here is a 620-residue protein sequence, read N- to C-terminus: Probable potassium transport system protein Kup 1 (620 aa).

A run of 12 helical transmembrane segments spans residues 7-27 (GIGL…TSPL), 50-70 (VLSL…VIVI), 102-122 (MMLG…TPAI), 136-156 (PDLK…LFAI), 168-188 (FGPV…ANIV), 211-231 (LMSF…EALY), 246-266 (WFGL…ALLI), 284-304 (MVVP…QAVI), 336-356 (IYVP…VVGF), 368-388 (IAVT…AALL), 393-413 (PVVV…FFAA), and 415-435 (IIKV…SFTV).

The protein belongs to the HAK/KUP transporter (TC 2.A.72) family.

The protein localises to the cell inner membrane. It catalyses the reaction K(+)(in) + H(+)(in) = K(+)(out) + H(+)(out). Transport of potassium into the cell. Likely operates as a K(+):H(+) symporter. This chain is Probable potassium transport system protein Kup 1, found in Rhodopseudomonas palustris (strain ATCC BAA-98 / CGA009).